A 479-amino-acid polypeptide reads, in one-letter code: Cyclin-dependent kinase F-1 (479 aa).

A Protein kinase domain is found at 21 to 418 (YEIFERVGSG…TMEMLNDKYL (398 aa)). ATP-binding positions include 27 to 35 (VGSGAYADV) and K50. Y32 bears the Phosphotyrosine mark. Residue D146 is the Proton acceptor of the active site. Residues S179, S208, and S247 each carry the phosphoserine modification. Residues 187 to 221 (KLEDKDGETSEPPEVIPDYENSPRQGSDGQEREAM) form a disordered region. T290 carries the post-translational modification Phosphothreonine. The segment at 434 to 479 (PTMSGPDEDSPRKWNDYREMDSDSDFDGFGPMNVKPTSSGFTIEFP) is disordered. Over residues 442-454 (DSPRKWNDYREMD) the composition is skewed to basic and acidic residues. Residues 468–479 (KPTSSGFTIEFP) are compositionally biased toward polar residues.

This sequence belongs to the protein kinase superfamily. CMGC Ser/Thr protein kinase family. CDC2/CDKX subfamily. In terms of tissue distribution, highly expressed in suspension cell culture. Expressed at low levels in all plant organs.

It catalyses the reaction L-seryl-[protein] + ATP = O-phospho-L-seryl-[protein] + ADP + H(+). The enzyme catalyses L-threonyl-[protein] + ATP = O-phospho-L-threonyl-[protein] + ADP + H(+). The catalysed reaction is [DNA-directed RNA polymerase] + ATP = phospho-[DNA-directed RNA polymerase] + ADP + H(+). In terms of biological role, CDK-activating kinase that modulates CDKD-2 and CDKD-3 activities by phosphorylation of the T-loop. Activates CDKD-2 C-terminal domain (CTD) kinase activity. Activates CDKA-1 probably by phosphorylation. Possesses a CDK kinase activity independently of association with cyclin CYCH1-1. Phosphorylates the CTD of the large subunit of RNA polymerase II. The protein is Cyclin-dependent kinase F-1 (CDKF-1) of Arabidopsis thaliana (Mouse-ear cress).